The sequence spans 433 residues: Serine carboxypeptidase-like 11 (433 aa).

The signal sequence occupies residues 1–21; sequence MELTLKLLVLLLFILNHHVGS. 3 disulfide bridges follow: Cys80–Cys322, Cys243–Cys257, and Cys281–Cys288. N-linked (GlcNAc...) asparagine glycosylation occurs at Asn101. The active site involves Ser176. The N-linked (GlcNAc...) asparagine glycan is linked to Asn342. Residue Asp358 is part of the active site. Residue Asn374 is glycosylated (N-linked (GlcNAc...) asparagine). The active site involves His411.

This sequence belongs to the peptidase S10 family. In terms of tissue distribution, ubiquitous.

Its subcellular location is the secreted. Probable carboxypeptidase. This is Serine carboxypeptidase-like 11 (SCPL11) from Arabidopsis thaliana (Mouse-ear cress).